The chain runs to 73 residues: Translational regulator CsrA (73 aa).

Belongs to the CsrA/RsmA family. In terms of assembly, homodimer; the beta-strands of each monomer intercalate to form a hydrophobic core, while the alpha-helices form wings that extend away from the core.

The protein localises to the cytoplasm. A translational regulator that binds mRNA to regulate translation initiation and/or mRNA stability. Usually binds in the 5'-UTR at or near the Shine-Dalgarno sequence preventing ribosome-binding, thus repressing translation. Its main target seems to be the major flagellin gene, while its function is anatagonized by FliW. The sequence is that of Translational regulator CsrA from Thermosipho africanus (strain TCF52B).